The following is a 122-amino-acid chain: Vitelline membrane protein 15a-3 (122 aa).

The signal sequence occupies residues 1 to 17 (MNKFIILALFAVAAASA). Pro residues predominate over residues 21–49 (YPPPPPKPYHAPPPPPHHAHPPPPPPPPA). Disordered stretches follow at residues 21–63 (YPPP…APVV) and 103–122 (PAPA…QFEE). One can recognise a VM domain in the interval 69 to 109 (HAPHAKCGANLLVGCAPSVAHAPCVPLHGHGHGYPAPAPHY).

The protein belongs to the vitelline membrane protein family. As to expression, expressed in the middle and posterior regions of the follicle cells.

It localises to the secreted. This chain is Vitelline membrane protein 15a-3, found in Aedes aegypti (Yellowfever mosquito).